We begin with the raw amino-acid sequence, 330 residues long: MISSATKTLQTNNKTIYVAILSTLTFFLFLDYIPGLQAWSAWVTPPVALFLGLIFALTCGQAHPKFNKKTSKYLLQYSVVGLGFGMNLQSALASGKEGMEFTVISVVGTLLIGWFIGRKIFKIDRNTSYLISSGTAICGGSAIAAIGPVLRAKDSEMSVALGTIFILNAIALFIFPAIGHALDMTEHQFGTWAAIAIHDTSSVVGAGAAYGEEALKVATTIKLTRALWIIPMAFATSFIFKSKGQKISIPWFIFFFILAMIANTYLLNGVPQLGAAINGIARKTLTITMFFIGASLSLDVLRSVGVKPLIQGVLLWVVISLSTLAYIYFV.

The next 10 helical transmembrane spans lie at 16–33, 38–60, 73–95, 99–116, 128–150, 160–182, 189–211, 221–240, 247–269, and 284–306; these read IYVAILSTLTFFLFLDYI, AWSAWVTPPVALFLGLIFALTCG, YLLQYSVVGLGFGMNLQSALASG, MEFTVISVVGTLLIGWFI, SYLISSGTAICGGSAIAAIGPVL, ALGTIFILNAIALFIFPAIGHAL, FGTWAAIAIHDTSSVVGAGAAYG, IKLTRALWIIPMAFATSFIF, ISIPWFIFFFILAMIANTYLLNG, and TLTITMFFIGASLSLDVLRSVGV.

It belongs to the UPF0324 family.

Its subcellular location is the cell membrane. This chain is UPF0324 membrane protein BT_4609, found in Bacteroides thetaiotaomicron (strain ATCC 29148 / DSM 2079 / JCM 5827 / CCUG 10774 / NCTC 10582 / VPI-5482 / E50).